A 418-amino-acid polypeptide reads, in one-letter code: Imidazolonepropionase (418 aa).

2 residues coordinate Fe(3+): His80 and His82. Zn(2+) is bound by residues His80 and His82. 4-imidazolone-5-propanoate is bound by residues Arg89, Tyr152, and His185. Tyr152 provides a ligand contact to N-formimidoyl-L-glutamate. His250 is a binding site for Fe(3+). Residue His250 participates in Zn(2+) binding. Gln253 is a 4-imidazolone-5-propanoate binding site. Asp325 contributes to the Fe(3+) binding site. Asp325 contacts Zn(2+). Residues Asn327 and Gly329 each coordinate N-formimidoyl-L-glutamate. Ser330 provides a ligand contact to 4-imidazolone-5-propanoate.

This sequence belongs to the metallo-dependent hydrolases superfamily. HutI family. Zn(2+) serves as cofactor. Requires Fe(3+) as cofactor.

It is found in the cytoplasm. The enzyme catalyses 4-imidazolone-5-propanoate + H2O = N-formimidoyl-L-glutamate. The protein operates within amino-acid degradation; L-histidine degradation into L-glutamate; N-formimidoyl-L-glutamate from L-histidine: step 3/3. Its function is as follows. Catalyzes the hydrolytic cleavage of the carbon-nitrogen bond in imidazolone-5-propanoate to yield N-formimidoyl-L-glutamate. It is the third step in the universal histidine degradation pathway. This Solibacter usitatus (strain Ellin6076) protein is Imidazolonepropionase.